A 521-amino-acid chain; its full sequence is Bifunctional purine biosynthesis protein PurH (521 aa).

The MGS-like domain maps to 1 to 145; the sequence is MIKQALISVS…KNHRDVTVIV (145 aa).

The protein belongs to the PurH family.

It carries out the reaction (6R)-10-formyltetrahydrofolate + 5-amino-1-(5-phospho-beta-D-ribosyl)imidazole-4-carboxamide = 5-formamido-1-(5-phospho-D-ribosyl)imidazole-4-carboxamide + (6S)-5,6,7,8-tetrahydrofolate. The catalysed reaction is IMP + H2O = 5-formamido-1-(5-phospho-D-ribosyl)imidazole-4-carboxamide. The protein operates within purine metabolism; IMP biosynthesis via de novo pathway; 5-formamido-1-(5-phospho-D-ribosyl)imidazole-4-carboxamide from 5-amino-1-(5-phospho-D-ribosyl)imidazole-4-carboxamide (10-formyl THF route): step 1/1. It functions in the pathway purine metabolism; IMP biosynthesis via de novo pathway; IMP from 5-formamido-1-(5-phospho-D-ribosyl)imidazole-4-carboxamide: step 1/1. The sequence is that of Bifunctional purine biosynthesis protein PurH from Burkholderia multivorans (strain ATCC 17616 / 249).